The primary structure comprises 200 residues: ATP-dependent Clp protease proteolytic subunit (200 aa).

Serine 103 functions as the Nucleophile in the catalytic mechanism. Histidine 128 is an active-site residue.

Belongs to the peptidase S14 family. As to quaternary structure, fourteen ClpP subunits assemble into 2 heptameric rings which stack back to back to give a disk-like structure with a central cavity, resembling the structure of eukaryotic proteasomes.

The protein resides in the cytoplasm. The catalysed reaction is Hydrolysis of proteins to small peptides in the presence of ATP and magnesium. alpha-casein is the usual test substrate. In the absence of ATP, only oligopeptides shorter than five residues are hydrolyzed (such as succinyl-Leu-Tyr-|-NHMec, and Leu-Tyr-Leu-|-Tyr-Trp, in which cleavage of the -Tyr-|-Leu- and -Tyr-|-Trp bonds also occurs).. Cleaves peptides in various proteins in a process that requires ATP hydrolysis. Has a chymotrypsin-like activity. Plays a major role in the degradation of misfolded proteins. In Vibrio vulnificus (strain CMCP6), this protein is ATP-dependent Clp protease proteolytic subunit.